Reading from the N-terminus, the 249-residue chain is 5'-nucleotidase SurE (249 aa).

Residues Asp-8, Asp-9, Ser-39, and Asn-91 each coordinate a divalent metal cation.

Belongs to the SurE nucleotidase family. The cofactor is a divalent metal cation.

It is found in the cytoplasm. The catalysed reaction is a ribonucleoside 5'-phosphate + H2O = a ribonucleoside + phosphate. Functionally, nucleotidase that shows phosphatase activity on nucleoside 5'-monophosphates. The sequence is that of 5'-nucleotidase SurE from Azotobacter vinelandii (strain DJ / ATCC BAA-1303).